Reading from the N-terminus, the 748-residue chain is Transducin-like enhancer protein 4 (748 aa).

Disordered stretches follow at residues M1–P20 and L157–A332. Residues M1 to Q112 are q domain. The GP domain stretch occupies residues H113 to S179. The segment covering P158–I177 has biased composition (basic and acidic residues). Low complexity predominate over residues K178–R189. Residues S180–P249 are ccN domain. A phosphoserine mark is found at S183, S187, S191, and S197. A compositionally biased stretch (basic and acidic residues) spans G190 to D227. K212 carries the post-translational modification N6-acetyllysine. S220 is subject to Phosphoserine. Residue S225 is modified to Phosphoserine; by CK2. S240 is modified (phosphoserine; by CDK1). Phosphoserine occurs at positions 244 and 248. Basic and acidic residues predominate over residues S248–A264. Positions R250–H427 are SP domain. An N6-acetyllysine modification is found at K256. A compositionally biased stretch (low complexity) spans P265–S280. Phosphoserine is present on S267. The span at T292–P303 shows a compositional bias: polar residues. A Phosphothreonine modification is found at T293. Phosphoserine is present on residues S296 and S298. Phosphothreonine is present on residues T300, T302, T309, and T315. S394 is modified (phosphoserine). WD repeat units follow at residues N460–P498, N506–K545, S550–Q589, G592–Q631, D633–L672, L674–Q713, and K715–Y748.

This sequence belongs to the WD repeat Groucho/TLE family. In terms of assembly, homooligomer and heterooligomer with other family members. Binds PAX5, LEF1, TCF7, TCF7L1 and TCF7L2. Interacts with ZNF703; TLE4 may mediate ZNF703 transcriptional repression. Interacts with SIX3 and SIX6. Interacts with PAX2. Phosphorylated. PAX5 binding increases phosphorylation. Post-translationally, ubiquitinated by XIAP/BIRC4.

It localises to the nucleus. Transcriptional corepressor that binds to a number of transcription factors. Inhibits the transcriptional activation mediated by PAX5, and by CTNNB1 and TCF family members in Wnt signaling. The effects of full-length TLE family members may be modulated by association with dominant-negative AES. Essential for the transcriptional repressor activity of SIX3 during retina and lens development and for SIX3 transcriptional auto-repression. Involved in transcriptional repression of GNRHR and enhances MSX1-mediated transcriptional repression of CGA/alpha-GSU. This chain is Transducin-like enhancer protein 4 (Tle4), found in Rattus norvegicus (Rat).